The sequence spans 407 residues: Dephospho-CoA kinase (407 aa).

The region spanning 3 to 204 (RIGLTGGIGA…QPFAHNLAQR (202 aa)) is the DPCK domain. 11–16 (GAGKSL) contacts ATP. The interval 196–407 (PFAHNLAQRQ…EWADAVHWRP (212 aa)) is UPF0157.

This sequence in the N-terminal section; belongs to the CoaE family. It in the C-terminal section; belongs to the UPF0157 (GrpB) family.

It is found in the cytoplasm. The enzyme catalyses 3'-dephospho-CoA + ATP = ADP + CoA + H(+). Its pathway is cofactor biosynthesis; coenzyme A biosynthesis; CoA from (R)-pantothenate: step 5/5. Functionally, catalyzes the phosphorylation of the 3'-hydroxyl group of dephosphocoenzyme A to form coenzyme A. The protein is Dephospho-CoA kinase of Mycobacterium bovis (strain ATCC BAA-935 / AF2122/97).